The primary structure comprises 424 residues: Enolase (424 aa).

Glutamine 164 provides a ligand contact to (2R)-2-phosphoglycerate. Glutamate 206 acts as the Proton donor in catalysis. Mg(2+) is bound by residues aspartate 243, glutamate 284, and aspartate 311. (2R)-2-phosphoglycerate-binding residues include lysine 336, arginine 365, serine 366, and lysine 387. The active-site Proton acceptor is lysine 336.

This sequence belongs to the enolase family. The cofactor is Mg(2+).

Its subcellular location is the cytoplasm. It localises to the secreted. The protein resides in the cell surface. It carries out the reaction (2R)-2-phosphoglycerate = phosphoenolpyruvate + H2O. The protein operates within carbohydrate degradation; glycolysis; pyruvate from D-glyceraldehyde 3-phosphate: step 4/5. Its function is as follows. Catalyzes the reversible conversion of 2-phosphoglycerate (2-PG) into phosphoenolpyruvate (PEP). It is essential for the degradation of carbohydrates via glycolysis. The sequence is that of Enolase from Wolbachia sp. subsp. Drosophila simulans (strain wRi).